Consider the following 549-residue polypeptide: MLLNSLFPSILAAATFVTSAAAEDLPPIEIVGNKFFYSNNGSQFYIKGIAYQQNNLDSNSTFVDPLADADNCKRDIPYLEQVDTNVIRVYALDVTQDHTECMQMLQDAGIYIIADLSQPDESINRNDPQWNLDLFERYTSVVDKFHNYTNVLGFFAGNEVTNNVSNTDASAFVKAAIRDTKAYIKAKGYRTIPVGYSANDDSDIRVSLARYFACGDEDESADFFGMNMYEWCGSSSFKASGYESATDDYKNLGIPIFFSEYGCNEVTPRKFQEVGTLFGSDMTDVWSGGIVYMYLQEENNYGLVSVSGSSVSTLQDFNSYKSEILDISPSSVQASAESASGVSRTSCPTNTDNWEASTELPPTPDKDICDCMSSSLKCVVADNVSTDDYSDLFDYVCAKIDCSGINANATTGDYGAYSPCGAKDKLSFVLNLYYEEQNESKSACDFSGSASLQSASTASSCAAYLSSAGVSGLGTVQGSVRTDTSEATTDSGSGSSNSGSASSSKSTSSSTSSGSSGSKSAATAVTVTTLTKIAAVGVSIIVGFGLITM.

A signal peptide spans 1–22 (MLLNSLFPSILAAATFVTSAAA). 2 N-linked (GlcNAc...) asparagine glycosylation sites follow: N40 and N59. A disulfide bridge links C72 with C101. N147 and N163 each carry an N-linked (GlcNAc...) asparagine glycan. Intrachain disulfides connect C214–C347, C232–C263, C369–C420, C378–C444, and C397–C402. Over residues 336–356 (AESASGVSRTSCPTNTDNWEA) the composition is skewed to polar residues. The tract at residues 336 to 361 (AESASGVSRTSCPTNTDNWEASTELP) is disordered. N383 carries an N-linked (GlcNAc...) asparagine glycan. N-linked (GlcNAc...) asparagine glycans are attached at residues N408 and N438. The tract at residues 479-519 (SVRTDTSEATTDSGSGSSNSGSASSSKSTSSSTSSGSSGSK) is disordered. The segment covering 487–519 (ATTDSGSGSSNSGSASSSKSTSSSTSSGSSGSK) has biased composition (low complexity).

The protein belongs to the glycosyl hydrolase 72 family.

Its subcellular location is the cell membrane. The sequence is that of Protein EPD1 (EPD1) from Candida maltosa (Yeast).